A 92-amino-acid polypeptide reads, in one-letter code: Small ribosomal subunit protein uS19 (92 aa).

It belongs to the universal ribosomal protein uS19 family.

In terms of biological role, protein S19 forms a complex with S13 that binds strongly to the 16S ribosomal RNA. The sequence is that of Small ribosomal subunit protein uS19 from Prochlorococcus marinus (strain MIT 9215).